The chain runs to 571 residues: Potassium-transporting ATPase potassium-binding subunit (571 aa).

The next 11 membrane-spanning stretches (helical) occupy residues 3–23 (LIGWFQIALFCAVVLALVKPL), 64–84 (LGYGLAMLVFHALGFVSLYAI), 135–155 (LGLTPQNFLSAATGLALAVAL), 179–199 (LYVLLPLCIGLTLFYVWQGMP), 254–274 (LANLVQMVTIFALGAAMTNVF), 284–304 (GWAILAAMGVLFLAGVAVTYA), 330–350 (FGIVASALFAVVTTAASCGAV), 357–376 (FTALGGLIPMLNMQLGEIIV), 421–441 (MLAILCLPLMMLGLAALATVL), 488–508 (LALGMAVGRFMVIVPALAIAG), and 527–547 (GGLFVGLLVGVILIVGGLTFF).

It belongs to the KdpA family. As to quaternary structure, the system is composed of three essential subunits: KdpA, KdpB and KdpC.

The protein localises to the cell inner membrane. In terms of biological role, part of the high-affinity ATP-driven potassium transport (or Kdp) system, which catalyzes the hydrolysis of ATP coupled with the electrogenic transport of potassium into the cytoplasm. This subunit binds the periplasmic potassium ions and delivers the ions to the membrane domain of KdpB through an intramembrane tunnel. This Methylorubrum populi (strain ATCC BAA-705 / NCIMB 13946 / BJ001) (Methylobacterium populi) protein is Potassium-transporting ATPase potassium-binding subunit.